The sequence spans 563 residues: Germacrene-A synthase (563 aa).

Mg(2+) contacts are provided by D316, D320, D460, T464, and E468. Residues 316 to 320 (DDTYD) carry the DDXXD motif motif.

It belongs to the terpene synthase family. Tpsa subfamily. Requires Mg(2+) as cofactor. Mn(2+) serves as cofactor. As to expression, high expression in disk florets, moderate expression in ray florets and detected in leaves and stems, but not in roots.

The catalysed reaction is (2E,6E)-farnesyl diphosphate = (+)-(R)-germacrene A + diphosphate. Its pathway is secondary metabolite biosynthesis; terpenoid biosynthesis. In terms of biological role, sesquiterpene synthase involved in germacrene A biosynthesis. May be involved in the biosynthesis of the sesquiterpene lactone matricine, one of the major active compounds of chamomile flowers. The protein is Germacrene-A synthase of Matricaria chamomilla var. recutita (German chamomile).